The following is a 597-amino-acid chain: uncharacterized protein (597 aa).

5 helical membrane passes run 37–57 (VLII…LWPV), 67–87 (IFWL…LQFA), 109–129 (GGER…YAAI), 134–154 (SVSL…FIAW), and 162–182 (ALMT…LAIV). One can recognise a Histidine kinase domain in the interval 393–597 (HQLARDLHDG…QITIFVPIES (205 aa)).

The protein resides in the cell membrane. This is an uncharacterized protein from Chloroflexus aurantiacus (strain ATCC 29366 / DSM 635 / J-10-fl).